A 385-amino-acid polypeptide reads, in one-letter code: DNA replication and repair protein RecF (385 aa).

Residue 30–37 (GPNGYGKT) participates in ATP binding.

Belongs to the RecF family.

Its subcellular location is the cytoplasm. Its function is as follows. The RecF protein is involved in DNA metabolism; it is required for DNA replication and normal SOS inducibility. RecF binds preferentially to single-stranded, linear DNA. It also seems to bind ATP. This is DNA replication and repair protein RecF from Mycobacterium tuberculosis (strain ATCC 25177 / H37Ra).